Reading from the N-terminus, the 400-residue chain is uncharacterized protein (400 aa).

Residues 161 to 380 (NDLLNIIDIV…YVVKVIVMRL (220 aa)) form the TR mART core domain.

This is an uncharacterized protein from Acanthamoeba polyphaga (Amoeba).